Reading from the N-terminus, the 314-residue chain is NADH-ubiquinone oxidoreductase chain 1 (314 aa).

The next 8 helical transmembrane spans lie at 5-25 (IMPLIGSLLLVICVMVGVAFL), 78-98 (FSPVFSLFLSLLIWMCIPYLI), 105-125 (LGVLFFLCCTSLGVYTVMIAG), 152-172 (ALILLSFIFLVGNYNFLSFYF), 176-196 (YVWFIFFCFPLGLVWLASCLA), 227-247 (LIFLAEYSSILFMSMLFVVIF), 251-271 (DIYSFMFFLKLSFISFIFIWV), and 294-314 (LSLNYLFFFVGLKIFFISLLF).

Belongs to the complex I subunit 1 family.

It is found in the mitochondrion inner membrane. It carries out the reaction a ubiquinone + NADH + 5 H(+)(in) = a ubiquinol + NAD(+) + 4 H(+)(out). In terms of biological role, core subunit of the mitochondrial membrane respiratory chain NADH dehydrogenase (Complex I) that is believed to belong to the minimal assembly required for catalysis. Complex I functions in the transfer of electrons from NADH to the respiratory chain. The immediate electron acceptor for the enzyme is believed to be ubiquinone. The polypeptide is NADH-ubiquinone oxidoreductase chain 1 (mt:ND1) (Anopheles gambiae (African malaria mosquito)).